Reading from the N-terminus, the 659-residue chain is MVMLQSPAQKASDSASAQNTAVGGLMSPNSNPDSPKSNTSPDVASADSVVSGTGGGSTPPAAKIPKFIISANGAAVAGKQEQELRYSLERLKQMSSESGSLLSRLSPLQEDSQDKEKPNHNNNNSLTNHNANSNTRRSQSPPASVGSVSFSSPAQQRKLLELNAVRHLARPEPLQHPHAALLQQHPHLLQNPQFLAAAQQHMHHHQHQHHQHPAHPHSHQHPHPHPHPHPHPHPSAVFHLRAPSSSSTAPPSPATSPLSPPTSPAMHSDQQMSPPIAPPQNPPHSSQPPQQQQVAAPSDMDLERIKLVAAVAARTTQASSTSALASASNSVSNASISISNSSSGSPSGRDLSDYGFRIQLGGLAAAAAAAAATSRQIAAATYARSDTSEELNVDGNDEDSNDGSHSTPSVCPVDLTRSVNSSAAANPSSASTSASSDRDAATKRLAFSVENILDPNKFTGNKLPSGPFGHPRQWSYERDEEMQERLDDDQSEDMSAQDLNDMDQDDMCDDGSDIDDPSSETDSKKGGSRNGDGKSGGGGGGGSKPRRARTAFTYEQLVSLENKFKTTRYLSVCERLNLALSLSLTETQVKIWFQNRRTKWKKQNPGMDVNSPTIPPPGGGSFGPGAYASGLLYSHAVPYPPYGPYFHPLGAHHLSHSHS.

Positions 1 to 21 are enriched in polar residues; it reads MVMLQSPAQKASDSASAQNTA. Disordered regions lie at residues 1–63, 94–152, 198–298, 316–349, 376–440, and 455–548; these read MVML…PAAK, MSSE…SFSS, AQQH…AAPS, TQAS…PSGR, QIAA…DRDA, and PNKF…PRRA. Low complexity-rich tracts occupy residues 27 to 51, 95 to 108, and 120 to 135; these read SPNS…SVVS, SSES…LSPL, and HNNN…NSNT. The span at 136–152 shows a compositional bias: polar residues; it reads RRSQSPPASVGSVSFSS. Over residues 201–232 the composition is skewed to basic residues; sequence HMHHHQHQHHQHPAHPHSHQHPHPHPHPHPHP. Repeat copies occupy residues 221–222, 223–224, 225–226, 227–228, 229–230, 231–232, and 233–234. The segment at 221–234 is 7 X 2 AA tandem repeats of H-P; it reads HPHPHPHPHPHPHP. 2 stretches are compositionally biased toward pro residues: residues 250–263 and 275–286; these read PPSP…PPTS and PIAPPQNPPHSS. 2 stretches are compositionally biased toward low complexity: residues 287–298 and 316–347; these read QPPQQQQVAAPS and TQAS…GSPS. Positions 388–401 are enriched in acidic residues; the sequence is SEELNVDGNDEDSN. Low complexity predominate over residues 417 to 435; the sequence is RSVNSSAAANPSSASTSAS. 2 stretches are compositionally biased toward acidic residues: residues 478-492 and 500-519; these read RDEE…DQSE and NDMD…DPSS. Gly residues predominate over residues 528 to 543; that stretch reads SRNGDGKSGGGGGGGS. Residues 545–604 constitute a DNA-binding region (homeobox); sequence PRRARTAFTYEQLVSLENKFKTTRYLSVCERLNLALSLSLTETQVKIWFQNRRTKWKKQN.

Belongs to the NK-1 homeobox family. As to expression, mesodermal precursor cells of distinct muscles during embryogenesis, a subset of neuronal cells of the CNS and their precursors and also in cells of a small region of the midgut.

The protein localises to the nucleus. Functionally, may play a role in specifying the identity of particular somatic muscles and neurons of the CNS. The chain is Homeobox protein slou (slou) from Drosophila melanogaster (Fruit fly).